A 213-amino-acid chain; its full sequence is MINVKICGVRTRDHALTAVDAGADMIGLVFAPSRRRINPDDAAVIAAAVRTAADDRRRQVSLIGVFVNDDVTRIRKIATLCGLDGIQLSGDEPVAYAADLAPFLVIKAIRFDNSAHERDWLSEDQAHVRLLVDAHVPGSYGGAGVVADWDRAADLARRRPLLLAGGLTPANVAEAIRYVRPWGVDVSSGVESNGVKDHQKIRAFVAAARAAAQ.

This sequence belongs to the TrpF family.

The enzyme catalyses N-(5-phospho-beta-D-ribosyl)anthranilate = 1-(2-carboxyphenylamino)-1-deoxy-D-ribulose 5-phosphate. It functions in the pathway amino-acid biosynthesis; L-tryptophan biosynthesis; L-tryptophan from chorismate: step 3/5. The protein is N-(5'-phosphoribosyl)anthranilate isomerase of Roseiflexus sp. (strain RS-1).